The sequence spans 124 residues: Apolipoprotein C-IV (124 aa).

A signal peptide spans 1 to 27 (MSLLRCRQQTLPSLCLSVLFLACFVAS).

This sequence belongs to the apolipoprotein C4 family.

It localises to the secreted. May participate in lipoprotein metabolism. This Rattus norvegicus (Rat) protein is Apolipoprotein C-IV (Apoc4).